The primary structure comprises 425 residues: Sodium-dependent glucose transporter 1A (425 aa).

Helical transmembrane passes span 35–55 (LIFVGRATGFLSGTMIGGVLF), 61–81 (FFLLGASMVATAAGLYLIPFC), 84–104 (AVLLIITMSVFGASVGVVDTG), 123–143 (ALHFSFALGAFLAPLLAKLAW), 183–203 (WAYASIGTFILVVSVFLFGLF), 228–248 (ALLCLLFLFFFFYVGAEITYG), 271–291 (SIFWGTFAACRGLAIFFATFL), 294–314 (GTMIVLSNIGSLVSCFFLVLF), 320–340 (CLWIATSVYGASMAATFPSGI), 355–375 (AFFVIGSALGDMAIPAVIGIL), and 382–402 (LPVVLYTCLGSAIFTAILFPV).

The protein belongs to the major facilitator superfamily.

It is found in the apical cell membrane. Its function is as follows. May function as a sodium-dependent glucose transporter. Potential channels for urea in the inner medulla of kidney. The protein is Sodium-dependent glucose transporter 1A of Mus musculus (Mouse).